The following is an 824-amino-acid chain: Probable acyl-CoA dehydrogenase IBR3 (824 aa).

Residue G2 is modified to N-acetylglycine. FAD is bound by residues 555–565 (FAMTEPQVASS), 589–591 (WTS), R706, Q776, and 776–780 (QVHGA). The short motif at 822–824 (SKL) is the Microbody targeting signal element.

It belongs to the acyl-CoA dehydrogenase family. FAD is required as a cofactor.

The protein localises to the peroxisome. The enzyme catalyses a 2,3-saturated acyl-CoA + A = a 2,3-dehydroacyl-CoA + AH2. Involved with IBR1 and IBR10 in the peroxisomal beta-oxidation of indole-3-butyric acid (IBA) to form indole-3-acetic acid (IAA), a biologically active auxin. May be responsible for catalyzing the first step in IBA-CoA beta-oxidation. May play a role in defense response to pathogenic bacteria. The chain is Probable acyl-CoA dehydrogenase IBR3 from Arabidopsis thaliana (Mouse-ear cress).